Consider the following 70-residue polypeptide: Large ribosomal subunit protein bL31 (70 aa).

Zn(2+) contacts are provided by Cys-16, Cys-18, Cys-37, and Cys-40.

It belongs to the bacterial ribosomal protein bL31 family. Type A subfamily. In terms of assembly, part of the 50S ribosomal subunit. The cofactor is Zn(2+).

Binds the 23S rRNA. This is Large ribosomal subunit protein bL31 from Shewanella baltica (strain OS223).